Consider the following 898-residue polypeptide: Filament-like plant protein 7 (898 aa).

2 coiled-coil regions span residues 23–224 (EVVA…TAEA) and 287–320 (EKIN…LQFS). Disordered stretches follow at residues 429–482 (DNRP…DIKS), 693–723 (PGNQ…KLEE), and 777–835 (KSNN…GGNS). Positions 434–459 (SSPICSSDSISATGPVENESNENSSE) are enriched in low complexity. Residues 460–469 (ATKTSGTVYS) show a composition bias toward polar residues. Residues 703-764 (VEEEANDKTA…KALTNSKETA (62 aa)) are a coiled coil. A compositionally biased stretch (basic and acidic residues) spans 808–822 (MKAEDHNTGESKDQK).

It belongs to the FPP family. In terms of assembly, interacts with WPP/MAF proteins.

This is Filament-like plant protein 7 (FPP7) from Arabidopsis thaliana (Mouse-ear cress).